Here is a 652-residue protein sequence, read N- to C-terminus: UvrABC system protein C (652 aa).

The 80-residue stretch at Lys-37–Ile-116 folds into the GIY-YIG domain. The UVR domain maps to Asp-226–Leu-261.

Belongs to the UvrC family. Interacts with UvrB in an incision complex.

Its subcellular location is the cytoplasm. In terms of biological role, the UvrABC repair system catalyzes the recognition and processing of DNA lesions. UvrC both incises the 5' and 3' sides of the lesion. The N-terminal half is responsible for the 3' incision and the C-terminal half is responsible for the 5' incision. The protein is UvrABC system protein C of Prochlorococcus marinus (strain MIT 9312).